A 212-amino-acid polypeptide reads, in one-letter code: Thaumatin-like protein 1b (212 aa).

7 disulfides stabilise this stretch: C47/C57, C62/C69, C117/C200, C122/C183, C130/C146, C150/C159, and C160/C170.

Belongs to the thaumatin family.

Its subcellular location is the secreted. The polypeptide is Thaumatin-like protein 1b (Malus domestica (Apple)).